The sequence spans 359 residues: Membrane-bound lytic murein transglycosylase C (359 aa).

Positions 1 to 16 (MKKYLALALIAPLLIS) are cleaved as a signal peptide. The N-palmitoyl cysteine moiety is linked to residue C17. Residue C17 is the site of S-diacylglycerol cysteine attachment.

It belongs to the transglycosylase Slt family.

Its subcellular location is the cell outer membrane. The catalysed reaction is Exolytic cleavage of the (1-&gt;4)-beta-glycosidic linkage between N-acetylmuramic acid (MurNAc) and N-acetylglucosamine (GlcNAc) residues in peptidoglycan, from either the reducing or the non-reducing ends of the peptidoglycan chains, with concomitant formation of a 1,6-anhydrobond in the MurNAc residue.. Murein-degrading enzyme. May play a role in recycling of muropeptides during cell elongation and/or cell division. In Shigella dysenteriae serotype 1 (strain Sd197), this protein is Membrane-bound lytic murein transglycosylase C.